A 315-amino-acid polypeptide reads, in one-letter code: Acetyl-coenzyme A carboxylase carboxyl transferase subunit alpha (315 aa).

Residues 40–293 (LQDKSKTLTE…RAELSSQLAM (254 aa)) form the CoA carboxyltransferase C-terminal domain.

The protein belongs to the AccA family. As to quaternary structure, acetyl-CoA carboxylase is a heterohexamer composed of biotin carboxyl carrier protein (AccB), biotin carboxylase (AccC) and two subunits each of ACCase subunit alpha (AccA) and ACCase subunit beta (AccD).

Its subcellular location is the cytoplasm. The catalysed reaction is N(6)-carboxybiotinyl-L-lysyl-[protein] + acetyl-CoA = N(6)-biotinyl-L-lysyl-[protein] + malonyl-CoA. The protein operates within lipid metabolism; malonyl-CoA biosynthesis; malonyl-CoA from acetyl-CoA: step 1/1. Its function is as follows. Component of the acetyl coenzyme A carboxylase (ACC) complex. First, biotin carboxylase catalyzes the carboxylation of biotin on its carrier protein (BCCP) and then the CO(2) group is transferred by the carboxyltransferase to acetyl-CoA to form malonyl-CoA. The sequence is that of Acetyl-coenzyme A carboxylase carboxyl transferase subunit alpha from Pseudomonas fluorescens (strain Pf0-1).